A 199-amino-acid chain; its full sequence is Protein PPP1R35 homolog (199 aa).

A compositionally biased stretch (basic residues) spans 1–11 (MPHKRRNRVHA). Disordered stretches follow at residues 1 to 23 (MPHKRRNRVHANQRNFTARRVSV) and 36 to 60 (ESCNGSHADNSSPDSPKAKEGAMTN). Polar residues predominate over residues 38 to 49 (CNGSHADNSSPD).

This sequence belongs to the PPP1R35 family. As to quaternary structure, interacts with Ana3; this complex is recruited to daughter centrioles before their conversion to centrosomes.

It is found in the cytoplasm. The protein localises to the cytoskeleton. Its subcellular location is the microtubule organizing center. It localises to the centrosome. The protein resides in the centriole. Participates in the later stages of centriole assembly through the interaction with Ana3 leading to the centriole to centrosome conversion in somatic cells. In Drosophila melanogaster (Fruit fly), this protein is Protein PPP1R35 homolog.